Reading from the N-terminus, the 264-residue chain is Aminoglycoside 3'-phosphotransferase (264 aa).

The active-site Proton acceptor is aspartate 190.

Belongs to the aminoglycoside phosphotransferase family.

The catalysed reaction is kanamycin A + ATP = kanamycin 3'-phosphate + ADP + H(+). Functionally, resistance to kanamycin and structurally-related aminoglycosides, including amikacin. This chain is Aminoglycoside 3'-phosphotransferase (aphA), found in Enterococcus faecalis (Streptococcus faecalis).